A 153-amino-acid polypeptide reads, in one-letter code: UPF0127 protein TGAM_1372 (153 aa).

This sequence belongs to the UPF0127 family.

This chain is UPF0127 protein TGAM_1372, found in Thermococcus gammatolerans (strain DSM 15229 / JCM 11827 / EJ3).